We begin with the raw amino-acid sequence, 210 residues long: Orotate phosphoribosyltransferase (210 aa).

Lys-26 is a 5-phospho-alpha-D-ribose 1-diphosphate binding site. Residue 34-35 (FF) coordinates orotate. 5-phospho-alpha-D-ribose 1-diphosphate contacts are provided by residues 72–73 (YK), Arg-98, Lys-99, Lys-102, His-104, and 123–131 (DDVITAGTA). Orotate is bound by residues Thr-127 and Arg-155.

This sequence belongs to the purine/pyrimidine phosphoribosyltransferase family. PyrE subfamily. Homodimer. Requires Mg(2+) as cofactor.

It catalyses the reaction orotidine 5'-phosphate + diphosphate = orotate + 5-phospho-alpha-D-ribose 1-diphosphate. The protein operates within pyrimidine metabolism; UMP biosynthesis via de novo pathway; UMP from orotate: step 1/2. Its function is as follows. Catalyzes the transfer of a ribosyl phosphate group from 5-phosphoribose 1-diphosphate to orotate, leading to the formation of orotidine monophosphate (OMP). In Legionella pneumophila (strain Paris), this protein is Orotate phosphoribosyltransferase.